The following is a 55-amino-acid chain: Bowman-Birk type proteinase inhibitor B1 (55 aa).

4 disulfide bridges follow: Cys6–Cys53, Cys12–Cys17, Cys26–Cys33, and Cys30–Cys45.

This sequence belongs to the Bowman-Birk serine protease inhibitor family. In terms of tissue distribution, expressed in bulb (at protein level).

In terms of biological role, serine protease inhibitor. Weakly inhibits trypsin (Ki = 167 nM). Does not inhibit bacterial subtilisin or mamallian chymotrypsin. This is Bowman-Birk type proteinase inhibitor B1 from Hyacinthus orientalis (Common hyacinth).